A 262-amino-acid chain; its full sequence is Cell division protein ZapD (262 aa).

It belongs to the ZapD family. In terms of assembly, interacts with FtsZ.

It localises to the cytoplasm. Functionally, cell division factor that enhances FtsZ-ring assembly. Directly interacts with FtsZ and promotes bundling of FtsZ protofilaments, with a reduction in FtsZ GTPase activity. The sequence is that of Cell division protein ZapD from Nitrosomonas europaea (strain ATCC 19718 / CIP 103999 / KCTC 2705 / NBRC 14298).